Reading from the N-terminus, the 538-residue chain is Atos homolog protein B (538 aa).

A compositionally biased stretch (low complexity) spans 1 to 18 (MRHVQAEPSPSSEPEAGP). 4 disordered regions span residues 1–103 (MRHV…GLLG), 153–185 (NTLH…QLHT), 197–300 (GGKS…VLDP), and 323–342 (SLRK…VPTP). The segment covering 227 to 238 (HTPPGPGPPGPC) has biased composition (pro residues). A phosphoserine mark is found at Ser254 and Ser255. Residues 323–334 (SLRKGPGLLSPP) show a composition bias toward low complexity. The tract at residues 348–430 (LLGSFEESLL…VPKVGTIQVT (83 aa)) is required for macropage invasion. The segment at 436–444 (QTVVKMFLV) is transactivation domain 1 (TAD1).

Belongs to the ATOS family.

The protein localises to the nucleus. In terms of biological role, transcription regulator that may syncronize transcriptional and translational programs. The sequence is that of Atos homolog protein B from Pongo abelii (Sumatran orangutan).